The chain runs to 305 residues: Taste receptor type 2 member 13 (305 aa).

Residues 1–7 (MGSNVYG) are Extracellular-facing. The helical transmembrane segment at 8 to 28 (ILTMVMIAEFVFGNMSNGFIV) threads the bilayer. Topologically, residues 29–43 (LINCIDWVRKGTLSS) are cytoplasmic. Residues 44–64 (IGWILLFLAISRMVLIWEMLI) form a helical membrane-spanning segment. Residues 65 to 88 (TWIKYMKYSFSFVTGTELRGIMFT) lie on the Extracellular side of the membrane. Residues 89–109 (WVISNHFSLWLATILSIFYLL) traverse the membrane as a helical segment. Over 110–128 (KIASFSKPVFLYLKWREKK) the chain is Cytoplasmic. Residues 129–149 (VLLIVLLGNLIFLMLNILQIN) form a helical membrane-spanning segment. Residues 150 to 182 (KHIEHWMYQYERNITWSSRVSDFAGFSNLVLLE) are Extracellular-facing. A glycan (N-linked (GlcNAc...) asparagine) is linked at asparagine 162. The chain crosses the membrane as a helical span at residues 183–203 (MIVFSVTPFTVALVSFILLIF). At 204–232 (SLWKHLQKMHLNSRGERDPSTKAHVNALR) the chain is on the cytoplasmic side. The helical transmembrane segment at 233–253 (IMVSFLLLYATYFISFFLSLI) threads the bilayer. Residues 254–262 (PMAHKTRLG) are Extracellular-facing. A helical transmembrane segment spans residues 263-283 (LMFSITVGLFYPSSHSFILIL). Residues 284–305 (GHSNLRQASLWVMTYLKCGQKH) are Cytoplasmic-facing.

The protein belongs to the G-protein coupled receptor T2R family.

It localises to the cell membrane. Receptor that may play a role in the perception of bitterness and is gustducin-linked. May play a role in sensing the chemical composition of the gastrointestinal content. The activity of this receptor may stimulate alpha gustducin, mediate PLC-beta-2 activation and lead to the gating of TRPM5. The polypeptide is Taste receptor type 2 member 13 (Mus musculus (Mouse)).